The primary structure comprises 238 residues: Polynucleotide 3'-phosphatase (238 aa).

The protein belongs to the DNA 3' phosphatase family.

The protein resides in the nucleus. It carries out the reaction a 3'end (2'-deoxyribonucleotide 3'-phosphate)-DNA + H2O = a 3'-end 2'-deoxyribonucleotide-DNA + phosphate. Functionally, dephosphorylate DNA's 3'-phosphate termini. Has a role in the repair of breaks in single-stranded DNA. This Saccharomyces cerevisiae (strain ATCC 204508 / S288c) (Baker's yeast) protein is Polynucleotide 3'-phosphatase (TPP1).